Consider the following 334-residue polypeptide: 3-ketodihydrosphingosine reductase (334 aa).

The N-terminal stretch at 1–20 is a signal peptide; it reads MIIYILFSLLAAVIVHLVYK. Residues glycine 36, serine 38, serine 39, glycine 40, arginine 62, lysine 66, aspartate 100, and isoleucine 101 each coordinate NADPH. The GXSXG signature appears at 36-40; it reads GGSSG. Serine 182 (proton donor) is an active-site residue. Residue tyrosine 196 is the Proton acceptor of the active site. The NADP(+) site is built by tyrosine 196 and lysine 200. The Lowers pKa of active site Tyr role is filled by lysine 200.

This sequence belongs to the short-chain dehydrogenases/reductases (SDR) family.

It localises to the endoplasmic reticulum. It catalyses the reaction sphinganine + NADP(+) = 3-oxosphinganine + NADPH + H(+). It functions in the pathway lipid metabolism; sphingolipid metabolism. In terms of biological role, catalyzes the reduction of 3'-oxosphinganine (3-ketodihydrosphingosine/KDS) to sphinganine (dihydrosphingosine/DHS), the second step of de novo sphingolipid biosynthesis. This chain is 3-ketodihydrosphingosine reductase (ksrA-1), found in Dictyostelium discoideum (Social amoeba).